The primary structure comprises 345 residues: Centromere protein U (345 aa).

2 stretches are compositionally biased toward basic residues: residues 1 to 10 and 19 to 29; these read MSSKKRTKRN and HKGRSHPRRKF. Disordered regions lie at residues 1–37 and 64–153; these read MSSKKRTKRNRAGDEYKEHKGRSHPRRKFLPPEEPDV and AVDA…SSVQ. Residues 88-106 are compositionally biased toward basic and acidic residues; sequence NAERSEKMLLETPEGDVHE. Low complexity predominate over residues 142 to 152; the sequence is SDSSVNSPSSV. The stretch at 201 to 294 forms a coiled coil; that stretch reads CSAFEDQVTD…QDYLDYREEN (94 aa). Residues 222-239 carry the Nuclear localization signal motif; it reads KKKNAKVVADIKKKRQRL.

The protein belongs to the CENP-U/AME1 family. Interacts with CENPH-CENPI complex at the kinetochore.

The protein resides in the nucleus. It is found in the chromosome. The protein localises to the centromere. Probable component of a centromeric complex involved in assembly of kinetochore proteins, mitotic progression and chromosome segregation. Required for maintenance of sister chromatid adhesion during mitotic checkpoint activation. The sequence is that of Centromere protein U (CENPU) from Gallus gallus (Chicken).